The following is a 194-amino-acid chain: Phosphoheptose isomerase (194 aa).

The region spanning 37–194 is the SIS domain; it reads ISNSFKQGGK…LIEFEMAKQA (158 aa). 52-54 is a binding site for substrate; the sequence is NGG. Residues histidine 61 and glutamate 65 each contribute to the Zn(2+) site. Substrate-binding positions include glutamate 65, 93–94, 119–121, serine 124, and glutamine 172; these read ND and STS. Zn(2+) is bound by residues glutamine 172 and histidine 180.

Belongs to the SIS family. GmhA subfamily. As to quaternary structure, homotetramer. Zn(2+) is required as a cofactor.

The protein localises to the cytoplasm. The catalysed reaction is 2 D-sedoheptulose 7-phosphate = D-glycero-alpha-D-manno-heptose 7-phosphate + D-glycero-beta-D-manno-heptose 7-phosphate. Its pathway is carbohydrate biosynthesis; D-glycero-D-manno-heptose 7-phosphate biosynthesis; D-glycero-alpha-D-manno-heptose 7-phosphate and D-glycero-beta-D-manno-heptose 7-phosphate from sedoheptulose 7-phosphate: step 1/1. Its function is as follows. Catalyzes the isomerization of sedoheptulose 7-phosphate in D-glycero-D-manno-heptose 7-phosphate. This chain is Phosphoheptose isomerase, found in Actinobacillus pleuropneumoniae serotype 5b (strain L20).